The primary structure comprises 484 residues: tRNA sulfurtransferase (484 aa).

The THUMP domain maps to 62-166 (GPVIDELVRI…DDSYHIAHRR (105 aa)). Residues 184–185 (LI), Lys-266, Gly-288, and Gln-297 each bind ATP. Cys-345 and Cys-456 are joined by a disulfide. The 79-residue stretch at 404 to 482 (PSVDDVIIDV…GHGNIKVYAP (79 aa)) folds into the Rhodanese domain. Cys-456 serves as the catalytic Cysteine persulfide intermediate.

Belongs to the ThiI family.

The protein localises to the cytoplasm. The catalysed reaction is [ThiI sulfur-carrier protein]-S-sulfanyl-L-cysteine + a uridine in tRNA + 2 reduced [2Fe-2S]-[ferredoxin] + ATP + H(+) = [ThiI sulfur-carrier protein]-L-cysteine + a 4-thiouridine in tRNA + 2 oxidized [2Fe-2S]-[ferredoxin] + AMP + diphosphate. It carries out the reaction [ThiS sulfur-carrier protein]-C-terminal Gly-Gly-AMP + S-sulfanyl-L-cysteinyl-[cysteine desulfurase] + AH2 = [ThiS sulfur-carrier protein]-C-terminal-Gly-aminoethanethioate + L-cysteinyl-[cysteine desulfurase] + A + AMP + 2 H(+). The protein operates within cofactor biosynthesis; thiamine diphosphate biosynthesis. In terms of biological role, catalyzes the ATP-dependent transfer of a sulfur to tRNA to produce 4-thiouridine in position 8 of tRNAs, which functions as a near-UV photosensor. Also catalyzes the transfer of sulfur to the sulfur carrier protein ThiS, forming ThiS-thiocarboxylate. This is a step in the synthesis of thiazole, in the thiamine biosynthesis pathway. The sulfur is donated as persulfide by IscS. The polypeptide is tRNA sulfurtransferase (Marinobacter nauticus (strain ATCC 700491 / DSM 11845 / VT8) (Marinobacter aquaeolei)).